Here is a 115-residue protein sequence, read N- to C-terminus: Methylmalonyl-CoA decarboxylase subunit delta (115 aa).

Residues 11 to 31 (WLIMAINMTVVFAVLIALGIL) form a helical membrane-spanning segment. The tract at residues 46 to 70 (EAPAATAPVATPTATPVAPANASAQ) is disordered. The segment covering 48 to 65 (PAATAPVATPTATPVAPA) has biased composition (low complexity).

This sequence belongs to the OadG family. The methylmalonyl-CoA decarboxylase is composed of five subunits: the carboxyltransferase alpha subunit (MmdA), the tunnel beta subunit (MmdB), the biotin-containing gamma subunit (MmdC), and the delta (MmdD) and epsilon (MmdE) subunits. Post-translationally, the N-terminus is blocked.

Its subcellular location is the cell membrane. It catalyses the reaction (S)-methylmalonyl-CoA + Na(+)(in) + H(+)(out) = propanoyl-CoA + Na(+)(out) + CO2. With respect to regulation, completely inhibited by avidin. Functionally, subunit of the sodium ion pump methylmalonyl-CoA decarboxylase, which converts the chemical energy of a decarboxylation reaction into an electrochemical gradient of Na(+) ions across the cytoplasmic membrane, thereby creating a sodium ion motive force that is used for ATP synthesis. The delta subunit is required for catalytic activity as well as for the proper assembly of the individual subunits to an enzyme complex. Can also convert malonyl-CoA into acetyl-CoA. The protein is Methylmalonyl-CoA decarboxylase subunit delta of Veillonella parvula (Staphylococcus parvulus).